The chain runs to 158 residues: Large ribosomal subunit protein mL50 (158 aa).

The protein belongs to the mitochondrion-specific ribosomal protein mL50 family. In terms of assembly, component of the mitochondrial large ribosomal subunit (mt-LSU). Mature mammalian 55S mitochondrial ribosomes consist of a small (28S) and a large (39S) subunit. The 28S small subunit contains a 12S ribosomal RNA (12S mt-rRNA) and 30 different proteins. The 39S large subunit contains a 16S rRNA (16S mt-rRNA), a copy of mitochondrial valine transfer RNA (mt-tRNA(Val)), which plays an integral structural role, and 52 different proteins.

The protein resides in the mitochondrion. This is Large ribosomal subunit protein mL50 (MRPL50) from Homo sapiens (Human).